The following is a 379-amino-acid chain: Cytochrome b (379 aa).

A run of 4 helical transmembrane segments spans residues 33–53 (FGSL…FLAM), 77–98 (WLIR…FIHV), 113–133 (WNIG…GYVL), and 178–198 (FFAF…VHLL). Heme b-binding residues include His-83 and His-97. Positions 182 and 196 each coordinate heme b. His-201 is a binding site for a ubiquinone. The next 4 helical transmembrane spans lie at 226 to 246 (IKDL…ALFF), 288 to 308 (LGGV…PLLN), 320 to 340 (ITQT…WIGG), and 347 to 367 (FTMI…ILMP).

Belongs to the cytochrome b family. As to quaternary structure, the cytochrome bc1 complex contains 11 subunits: 3 respiratory subunits (MT-CYB, CYC1 and UQCRFS1), 2 core proteins (UQCRC1 and UQCRC2) and 6 low-molecular weight proteins (UQCRH/QCR6, UQCRB/QCR7, UQCRQ/QCR8, UQCR10/QCR9, UQCR11/QCR10 and a cleavage product of UQCRFS1). This cytochrome bc1 complex then forms a dimer. Requires heme b as cofactor.

It is found in the mitochondrion inner membrane. Functionally, component of the ubiquinol-cytochrome c reductase complex (complex III or cytochrome b-c1 complex) that is part of the mitochondrial respiratory chain. The b-c1 complex mediates electron transfer from ubiquinol to cytochrome c. Contributes to the generation of a proton gradient across the mitochondrial membrane that is then used for ATP synthesis. The polypeptide is Cytochrome b (MT-CYB) (Akodon dolores (Dolorous grass mouse)).